The primary structure comprises 373 residues: 4-hydroxy-3-methylbut-2-en-1-yl diphosphate synthase (flavodoxin) (373 aa).

Positions 270, 273, 305, and 312 each coordinate [4Fe-4S] cluster.

Belongs to the IspG family. It depends on [4Fe-4S] cluster as a cofactor.

The enzyme catalyses (2E)-4-hydroxy-3-methylbut-2-enyl diphosphate + oxidized [flavodoxin] + H2O + 2 H(+) = 2-C-methyl-D-erythritol 2,4-cyclic diphosphate + reduced [flavodoxin]. The protein operates within isoprenoid biosynthesis; isopentenyl diphosphate biosynthesis via DXP pathway; isopentenyl diphosphate from 1-deoxy-D-xylulose 5-phosphate: step 5/6. Functionally, converts 2C-methyl-D-erythritol 2,4-cyclodiphosphate (ME-2,4cPP) into 1-hydroxy-2-methyl-2-(E)-butenyl 4-diphosphate. The protein is 4-hydroxy-3-methylbut-2-en-1-yl diphosphate synthase (flavodoxin) of Klebsiella pneumoniae (strain 342).